The following is a 386-amino-acid chain: Large ribosomal subunit protein uL4 (386 aa).

Residues V341–R357 show a composition bias toward basic and acidic residues. Residues V341–K386 are disordered. Positions G369 to K386 are enriched in basic residues.

Belongs to the universal ribosomal protein uL4 family.

In Urechis caupo (Innkeeper worm), this protein is Large ribosomal subunit protein uL4 (RPL4).